The primary structure comprises 253 residues: Imidazole glycerol phosphate synthase subunit HisF (253 aa).

Active-site residues include D11 and D130.

Belongs to the HisA/HisF family. Heterodimer of HisH and HisF.

Its subcellular location is the cytoplasm. The enzyme catalyses 5-[(5-phospho-1-deoxy-D-ribulos-1-ylimino)methylamino]-1-(5-phospho-beta-D-ribosyl)imidazole-4-carboxamide + L-glutamine = D-erythro-1-(imidazol-4-yl)glycerol 3-phosphate + 5-amino-1-(5-phospho-beta-D-ribosyl)imidazole-4-carboxamide + L-glutamate + H(+). Its pathway is amino-acid biosynthesis; L-histidine biosynthesis; L-histidine from 5-phospho-alpha-D-ribose 1-diphosphate: step 5/9. Functionally, IGPS catalyzes the conversion of PRFAR and glutamine to IGP, AICAR and glutamate. The HisF subunit catalyzes the cyclization activity that produces IGP and AICAR from PRFAR using the ammonia provided by the HisH subunit. This Gluconobacter oxydans (strain 621H) (Gluconobacter suboxydans) protein is Imidazole glycerol phosphate synthase subunit HisF.